Reading from the N-terminus, the 268-residue chain is Zwei Ig domain protein zig-8 (268 aa).

An N-terminal signal peptide occupies residues 1-21 (MRRFSNICVILFSFLYATGHG). Ig-like C2-type domains lie at 40–128 (PSQT…NTVY) and 140–251 (PSPS…NSAT). C57 and C118 form a disulfide bridge. N82, N155, N164, and N191 each carry an N-linked (GlcNAc...) asparagine glycan. A disulfide bond links C165 and C226.

As to expression, expressed in PVT neurons and pharyngeal muscles.

It is found in the secreted. Its function is as follows. Together with zig-5, required postembryonically to maintain the position of ASI and ASH head neuron cell bodies and ventral nerve cord axons of PVQ, PVP and HSN neurons by preventing their displacement that could occur during body growth and movement. May act by reducing L1CAM-like protein sax-7 (long isoform) adhesion. The sequence is that of Zwei Ig domain protein zig-8 from Caenorhabditis elegans.